Consider the following 342-residue polypeptide: Dihydroorotate dehydrogenase (quinone) (342 aa).

FMN-binding positions include 60-64 (AGLDK) and Thr84. Lys64 is a binding site for substrate. 109–113 (NRMGF) contacts substrate. 2 residues coordinate FMN: Asn137 and Asn170. Residue Asn170 participates in substrate binding. Ser173 (nucleophile) is an active-site residue. Asn175 lines the substrate pocket. Residues Lys215 and Thr243 each contribute to the FMN site. 244–245 (NT) contributes to the substrate binding site. FMN-binding positions include Gly266, Gly295, and 316–317 (YS).

Belongs to the dihydroorotate dehydrogenase family. Type 2 subfamily. As to quaternary structure, monomer. Requires FMN as cofactor.

It localises to the cell membrane. The enzyme catalyses (S)-dihydroorotate + a quinone = orotate + a quinol. The protein operates within pyrimidine metabolism; UMP biosynthesis via de novo pathway; orotate from (S)-dihydroorotate (quinone route): step 1/1. Functionally, catalyzes the conversion of dihydroorotate to orotate with quinone as electron acceptor. This is Dihydroorotate dehydrogenase (quinone) from Nitrosomonas europaea (strain ATCC 19718 / CIP 103999 / KCTC 2705 / NBRC 14298).